We begin with the raw amino-acid sequence, 237 residues long: Ribonuclease PH (237 aa).

Phosphate-binding positions include arginine 86 and 124–126 (GTR).

Belongs to the RNase PH family. In terms of assembly, homohexameric ring arranged as a trimer of dimers.

It carries out the reaction tRNA(n+1) + phosphate = tRNA(n) + a ribonucleoside 5'-diphosphate. Phosphorolytic 3'-5' exoribonuclease that plays an important role in tRNA 3'-end maturation. Removes nucleotide residues following the 3'-CCA terminus of tRNAs; can also add nucleotides to the ends of RNA molecules by using nucleoside diphosphates as substrates, but this may not be physiologically important. Probably plays a role in initiation of 16S rRNA degradation (leading to ribosome degradation) during starvation. This Shewanella woodyi (strain ATCC 51908 / MS32) protein is Ribonuclease PH.